The following is a 545-amino-acid chain: Phenylalanine--tRNA ligase beta subunit (545 aa).

Positions 270–346 (LEPKERLLTT…KGYGYENIKV (77 aa)) constitute a B5 domain. The Mg(2+) site is built by aspartate 324, aspartate 330, glutamate 333, and aspartate 334.

This sequence belongs to the phenylalanyl-tRNA synthetase beta subunit family. Type 2 subfamily. Tetramer of two alpha and two beta subunits. Mg(2+) is required as a cofactor.

The protein localises to the cytoplasm. It catalyses the reaction tRNA(Phe) + L-phenylalanine + ATP = L-phenylalanyl-tRNA(Phe) + AMP + diphosphate + H(+). In Methanosarcina acetivorans (strain ATCC 35395 / DSM 2834 / JCM 12185 / C2A), this protein is Phenylalanine--tRNA ligase beta subunit.